Consider the following 301-residue polypeptide: MKNKAGFVALIGKPNAGKSTLLNTLLNAHLALVSHKANATRKLMKCIVPFKDKEGYESQIIFLDTPGLHHQEKLLNQCMLSQALKAMGDAELCVFLASVHDDLKGYEEFLSLCQKPHILALSKIDMATHKQVLQKLQEYQQYNSQFLALVPLSAKKSQNLNALLECISKHLIPSAWLFEKDLMSDEKMRDIYKEIIRESLFDFLSDEIPYESDVVIDKFIEEERIDKVYARIIVEKESQKKIVIGKNGVNIKRIGTSARLKMQEVGEKKVFLNLQVIAQKSWSKEEKSLQKLGYTHQRNRD.

In terms of domain architecture, Era-type G spans 4 to 173 (KAGFVALIGK…LECISKHLIP (170 aa)). A G1 region spans residues 12–19 (GKPNAGKS). Residue 12–19 (GKPNAGKS) participates in GTP binding. The G2 stretch occupies residues 38 to 42 (NATRK). The segment at 64-67 (DTPG) is G3. Residues 64 to 68 (DTPGL) and 122 to 125 (SKID) each bind GTP. Positions 122–125 (SKID) are G4. A G5 region spans residues 152-154 (LSA). In terms of domain architecture, KH type-2 spans 204-280 (LSDEIPYESD…FLNLQVIAQK (77 aa)).

This sequence belongs to the TRAFAC class TrmE-Era-EngA-EngB-Septin-like GTPase superfamily. Era GTPase family. As to quaternary structure, monomer.

The protein localises to the cytoplasm. The protein resides in the cell inner membrane. In terms of biological role, an essential GTPase that binds both GDP and GTP, with rapid nucleotide exchange. Plays a role in 16S rRNA processing and 30S ribosomal subunit biogenesis and possibly also in cell cycle regulation and energy metabolism. The protein is GTPase Era of Helicobacter pylori (strain HPAG1).